Here is a 637-residue protein sequence, read N- to C-terminus: tRNA uridine 5-carboxymethylaminomethyl modification enzyme MnmG (637 aa).

Residues 15-20, isoleucine 127, and serine 182 contribute to the FAD site; that span reads GAGHAG. 276–290 serves as a coordination point for NAD(+); sequence GPRYCPSIEDKIVRF. Glutamine 373 is an FAD binding site.

This sequence belongs to the MnmG family. Homodimer. Heterotetramer of two MnmE and two MnmG subunits. FAD is required as a cofactor.

Its subcellular location is the cytoplasm. Functionally, NAD-binding protein involved in the addition of a carboxymethylaminomethyl (cmnm) group at the wobble position (U34) of certain tRNAs, forming tRNA-cmnm(5)s(2)U34. The sequence is that of tRNA uridine 5-carboxymethylaminomethyl modification enzyme MnmG from Streptococcus pneumoniae (strain ATCC BAA-255 / R6).